A 413-amino-acid polypeptide reads, in one-letter code: Tyrosine--tRNA ligase (413 aa).

The 'HIGH' region signature appears at 59–68; it reads PTAPDIHLGH. The 'KMSKS' region signature appears at 243–247; sequence KMSKS. Lys246 contacts ATP. The S4 RNA-binding domain occupies 351 to 411; it reads LAIGQLLKQA…GKRRFARVTL (61 aa).

Belongs to the class-I aminoacyl-tRNA synthetase family. TyrS type 2 subfamily. As to quaternary structure, homodimer.

The protein resides in the cytoplasm. The enzyme catalyses tRNA(Tyr) + L-tyrosine + ATP = L-tyrosyl-tRNA(Tyr) + AMP + diphosphate + H(+). In terms of biological role, catalyzes the attachment of tyrosine to tRNA(Tyr) in a two-step reaction: tyrosine is first activated by ATP to form Tyr-AMP and then transferred to the acceptor end of tRNA(Tyr). This Burkholderia pseudomallei (strain 1710b) protein is Tyrosine--tRNA ligase.